The primary structure comprises 251 residues: Hydroxyacylglutathione hydrolase (251 aa).

Histidine 53, histidine 55, aspartate 57, histidine 58, histidine 110, aspartate 127, and histidine 165 together coordinate Zn(2+).

Belongs to the metallo-beta-lactamase superfamily. Glyoxalase II family. In terms of assembly, monomer. It depends on Zn(2+) as a cofactor.

The catalysed reaction is an S-(2-hydroxyacyl)glutathione + H2O = a 2-hydroxy carboxylate + glutathione + H(+). It participates in secondary metabolite metabolism; methylglyoxal degradation; (R)-lactate from methylglyoxal: step 2/2. Its function is as follows. Thiolesterase that catalyzes the hydrolysis of S-D-lactoyl-glutathione to form glutathione and D-lactic acid. The protein is Hydroxyacylglutathione hydrolase of Pectobacterium carotovorum subsp. carotovorum (strain PC1).